The chain runs to 123 residues: Ragulator complex protein LAMTOR3-B (123 aa).

It belongs to the LAMTOR3 family. In terms of assembly, part of the Ragulator complex composed of lamtor1, lamtor2, lamtor3, lamtor4 and lamtor5. The Ragulator complex interacts with slc38a9; the probable amino acid sensor. Component of the lysosomal folliculin complex (LFC).

The protein localises to the late endosome membrane. Functionally, as part of the Ragulator complex it is involved in amino acid sensing and activation of mTORC1, a signaling complex promoting cell growth in response to growth factors, energy levels, and amino acids. Activated by amino acids through a mechanism involving the lysosomal V-ATPase, the Ragulator plays a dual role for the small GTPases Rag (RagA/RRAGA, RagB/RRAGB, RagC/RRAGC and/or RagD/RRAGD): it (1) acts as a guanine nucleotide exchange factor (GEF), activating the small GTPases Rag and (2) mediates recruitment of Rag GTPases to the lysosome membrane. Activated Ragulator and Rag GTPases function as a scaffold recruiting mTORC1 to lysosomes where it is in turn activated. The sequence is that of Ragulator complex protein LAMTOR3-B (lamtor3-b) from Xenopus laevis (African clawed frog).